Here is a 288-residue protein sequence, read N- to C-terminus: Prohibitin-1, mitochondrial (288 aa).

The Mitochondrial matrix segment spans residues Met-1–Pro-10. A helical; Signal-anchor for type II membrane protein transmembrane segment spans residues Gly-11–Tyr-30. Residues Gly-31–Asn-288 lie on the Mitochondrial intermembrane side of the membrane. A coiled-coil region spans residues Lys-186 to Ala-219.

It belongs to the prohibitin family. In terms of assembly, component of a prohibitin multimeric complex in mitochondrial membranes. As to expression, mostly expressed in proliferative tissues, including vasculature, shoot and root apical tissues.

The protein localises to the mitochondrion inner membrane. In terms of biological role, prohibitin probably acts as a holdase/unfoldase for the stabilization of newly synthesized mitochondrial proteins. The sequence is that of Prohibitin-1, mitochondrial (PHB1) from Arabidopsis thaliana (Mouse-ear cress).